We begin with the raw amino-acid sequence, 80 residues long: Putative defensin-like protein 15 (80 aa).

An N-terminal signal peptide occupies residues methionine 1–alanine 29. Position 30 is a pyrrolidone carboxylic acid (glutamine 30). 4 cysteine pairs are disulfide-bonded: cysteine 33–cysteine 80, cysteine 44–cysteine 65, cysteine 50–cysteine 74, and cysteine 54–cysteine 76.

This sequence belongs to the DEFL family.

It is found in the secreted. Confers broad-spectrum resistance to pathogens. This is Putative defensin-like protein 15 (PDF1.2B) from Arabidopsis thaliana (Mouse-ear cress).